The sequence spans 210 residues: Probable GTP-binding protein EngB (210 aa).

The EngB-type G domain occupies Met-27 to Gln-201. Residues Gly-35–Ser-42, Gly-62–Leu-66, Asp-80–Gly-83, Thr-147–Asp-150, and Phe-180–Val-182 each bind GTP. Ser-42 and Thr-64 together coordinate Mg(2+).

It belongs to the TRAFAC class TrmE-Era-EngA-EngB-Septin-like GTPase superfamily. EngB GTPase family. The cofactor is Mg(2+).

Its function is as follows. Necessary for normal cell division and for the maintenance of normal septation. The chain is Probable GTP-binding protein EngB from Photorhabdus laumondii subsp. laumondii (strain DSM 15139 / CIP 105565 / TT01) (Photorhabdus luminescens subsp. laumondii).